The sequence spans 93 residues: Putative defensin-like protein 282 (93 aa).

An N-terminal signal peptide occupies residues 1 to 25; it reads MANATSFIALAYLLASALMTTVVLG. 3 disulfide bridges follow: cysteine 51–cysteine 83, cysteine 66–cysteine 90, and cysteine 72–cysteine 92.

Belongs to the DEFL family.

The protein localises to the secreted. The protein is Putative defensin-like protein 282 of Arabidopsis thaliana (Mouse-ear cress).